The chain runs to 967 residues: Translation initiation factor IF-2 (967 aa).

The segment at Ala34–Pro363 is disordered. 2 stretches are compositionally biased toward low complexity: residues Pro51 to Ala96 and Ala103 to Pro154. The segment covering Arg184–Pro196 has biased composition (gly residues). Over residues Gly197–Gly206 the composition is skewed to low complexity. The span at Pro300–Gly333 shows a compositional bias: gly residues. Residues Ala334–Lys345 show a composition bias toward basic residues. A tr-type G domain is found at Pro460–Glu632. Positions Gly469–Thr476 are G1. GTP is bound at residue Gly469–Thr476. A G2 region spans residues Gly494–His498. The tract at residues Asp519–Gly522 is G3. GTP-binding positions include Asp519–His523 and Asn573–Asp576. The segment at Asn573 to Asp576 is G4. Positions Ser609–Arg611 are G5.

It belongs to the TRAFAC class translation factor GTPase superfamily. Classic translation factor GTPase family. IF-2 subfamily.

The protein resides in the cytoplasm. One of the essential components for the initiation of protein synthesis. Protects formylmethionyl-tRNA from spontaneous hydrolysis and promotes its binding to the 30S ribosomal subunits. Also involved in the hydrolysis of GTP during the formation of the 70S ribosomal complex. In Kocuria rhizophila (strain ATCC 9341 / DSM 348 / NBRC 103217 / DC2201), this protein is Translation initiation factor IF-2.